We begin with the raw amino-acid sequence, 379 residues long: Putative phosphatidate phosphatase (379 aa).

Positions 1 to 53 (MPAVKIIMSTETSASETTPLRRSENETPDHKELAQSNSNSRQTTVNSNNNNYS) are disordered. A compositionally biased stretch (polar residues) spans 9-18 (STETSASETT). Over residues 19-33 (PLRRSENETPDHKEL) the composition is skewed to basic and acidic residues. Positions 35–53 (QSNSNSRQTTVNSNNNNYS) are enriched in low complexity. N-linked (GlcNAc...) asparagine glycosylation is present at Asn51. The next 2 membrane-spanning stretches (helical) occupy residues 90-110 (VGLD…FFLL) and 138-158 (MLYF…EVII). N-linked (GlcNAc...) asparagine glycosylation occurs at Asn169. A run of 2 helical transmembrane segments spans residues 266–286 (SFPS…ALYL) and 330–350 (AGSL…SDLF).

The protein belongs to the PA-phosphatase related phosphoesterase family. In terms of assembly, homodimer. This complex seems not to be involved in substrate recognition, it may confer only structural or functional stability. In terms of tissue distribution, expressed in embryonic gut in a pattern that guides germ cells towards mesoderm (initially in hindgut and then on lower side of gut). During extended germ band stage, expressed in ectoderm as a medial band throughout the trunk.

Its subcellular location is the membrane. The enzyme catalyses a 1,2-diacyl-sn-glycero-3-phosphate + H2O = a 1,2-diacyl-sn-glycerol + phosphate. Its function is as follows. Responsible for guiding the germ cells early in the process of migration from the lumen of the developing gut towards the overlying mesoderm, where the germ cells enter the gonads. May be involved in lipid metabolism. The chain is Putative phosphatidate phosphatase (wun) from Drosophila melanogaster (Fruit fly).